We begin with the raw amino-acid sequence, 343 residues long: N-acetyl-gamma-glutamyl-phosphate reductase (343 aa).

Residue Cys-150 is part of the active site.

The protein belongs to the NAGSA dehydrogenase family. Type 1 subfamily.

It localises to the cytoplasm. The enzyme catalyses N-acetyl-L-glutamate 5-semialdehyde + phosphate + NADP(+) = N-acetyl-L-glutamyl 5-phosphate + NADPH + H(+). The protein operates within amino-acid biosynthesis; L-arginine biosynthesis; N(2)-acetyl-L-ornithine from L-glutamate: step 3/4. Functionally, catalyzes the NADPH-dependent reduction of N-acetyl-5-glutamyl phosphate to yield N-acetyl-L-glutamate 5-semialdehyde. The protein is N-acetyl-gamma-glutamyl-phosphate reductase of Nitrosococcus oceani (strain ATCC 19707 / BCRC 17464 / JCM 30415 / NCIMB 11848 / C-107).